Reading from the N-terminus, the 74-residue chain is Large ribosomal subunit protein bL31 (74 aa).

Belongs to the bacterial ribosomal protein bL31 family. Type A subfamily. Part of the 50S ribosomal subunit.

Binds the 23S rRNA. The protein is Large ribosomal subunit protein bL31 of Chlorobaculum parvum (strain DSM 263 / NCIMB 8327) (Chlorobium vibrioforme subsp. thiosulfatophilum).